The chain runs to 212 residues: V-type ATP synthase subunit E (212 aa).

Belongs to the V-ATPase E subunit family.

In terms of biological role, produces ATP from ADP in the presence of a proton gradient across the membrane. The protein is V-type ATP synthase subunit E of Nitrosococcus oceani (strain ATCC 19707 / BCRC 17464 / JCM 30415 / NCIMB 11848 / C-107).